The primary structure comprises 132 residues: Small ribosomal subunit protein uS8 (132 aa).

This sequence belongs to the universal ribosomal protein uS8 family. Part of the 30S ribosomal subunit. Contacts proteins S5 and S12.

Its function is as follows. One of the primary rRNA binding proteins, it binds directly to 16S rRNA central domain where it helps coordinate assembly of the platform of the 30S subunit. The chain is Small ribosomal subunit protein uS8 from Bifidobacterium animalis subsp. lactis (strain AD011).